We begin with the raw amino-acid sequence, 590 residues long: Putative sodium/calcium exchanger 6 (590 aa).

The signal sequence occupies residues Met1 to Gly19. 11 helical membrane-spanning segments follow: residues Ile97 to Ala117, Val139 to Ala159, Leu173 to Phe193, Ile208 to Val228, Ile230 to Ser250, Pro368 to Cys388, Pro397 to Phe417, Ile440 to Val460, Ala499 to Ile519, Tyr535 to Ala555, and Leu568 to Val588.

It belongs to the Ca(2+):cation antiporter (CaCA) (TC 2.A.19) family.

It localises to the membrane. The chain is Putative sodium/calcium exchanger 6 (ncx-6) from Caenorhabditis elegans.